Here is a 60-residue protein sequence, read N- to C-terminus: Large ribosomal subunit protein uL30 (60 aa).

Belongs to the universal ribosomal protein uL30 family. In terms of assembly, part of the 50S ribosomal subunit.

This chain is Large ribosomal subunit protein uL30, found in Streptococcus pneumoniae (strain Hungary19A-6).